Reading from the N-terminus, the 900-residue chain is MTGTPASRGSLTHEPDRFSDPAWELLLAGQDMARRWRHDQLDVEHLIQVLFSDSSFRRWVEPLPLRSDDLLDRLEDVLADQPPARGDQLFIGEDLEQLLETADQVRGRWGDRSIDVPQLIVAVGADPRIGAELFAAQGLAVDRLESLLRQPSVSPAPAPPPVPTAASAPAPTPRSAPAPRVMAPEPEPMVELEREPSALEAYGRDLTEEAEAGSLDPVIGRDSEIRNLIKVLSRRSKNNPVLIGEPGVGKTAIAELLAQRIVAGEVPDSLQGLRLIALDLGALIAGAKFRGQFEERLRSVLEEVSRSDSGVVLFIDELHTVVGSDRSSTDAGSLLKPALARGDLRCIGATTPEEYRRTVEKDPALNRRFQQVLIREPDLELSLEILRGLRERYELHHGVTITDEAIQTANRLADRYISDRCLPDKAIDLIDEAAAQLKIEVTSKPQVVEEAEADLRRVELALLAAEEAPEEERIQLQRQRLEVSSRLDDLRRRWQEERTQLEELGQLLQQDEDLRHAIAEAEREGALEEAARLQYDQLHTVQQRREALEASQAEAQSAGTALLREQVEAGDIADLVARWTGIPVQRLLAGERRKLLALESHLSERVIGQVEAVAAVAAAIRRARAGMKDPRRPVGSFLFLGPTGVGKTELAKALATSLFDEEEALVRLDMSEFMERNASARLIGAPPGYVGYEEGGQLTEAVRRRPYAVLLLDEVEKAHPDVFNLLLQVLDDGRLTDSQGLTVDFRHTVVVMTSNLASPVILEHARSGSSDDAQLQQQVDAALSSQFRPEFLNRIDEVIRFRPLKVKDLVRIVRLQLADLSTLMAEQGLSLEVDDAVADSLARQGHEPEYGARPLRRVLRRQLENPLATQLLEERFRSAHGIRVRCGTDDGASLEFEPLE.

The Clp R domain occupies 15 to 154 (PDRFSDPAWE…ESLLRQPSVS (140 aa)). 2 repeat regions span residues 18–81 (FSDP…LADQ) and 91–154 (IGED…PSVS). The segment at 151 to 183 (PSVSPAPAPPPVPTAASAPAPTPRSAPAPRVMA) is disordered. Residues 154 to 163 (SPAPAPPPVP) are compositionally biased toward pro residues. Residues 191–376 (ELEREPSALE…RRFQQVLIRE (186 aa)) form an NBD1 region. Residue 244 to 251 (GEPGVGKT) coordinates ATP. Residues 377–581 (PDLELSLEIL…IADLVARWTG (205 aa)) are linker. Residues 427–557 (IDLIDEAAAQ…LEASQAEAQS (131 aa)) adopt a coiled-coil conformation. The interval 591 to 803 (ERRKLLALES…RIDEVIRFRP (213 aa)) is NBD2. An ATP-binding site is contributed by 641–648 (GPTGVGKT). The interval 804-900 (LKVKDLVRIV…GASLEFEPLE (97 aa)) is C-terminal.

Belongs to the ClpA/ClpB family. Homohexamer. The oligomerization is ATP-dependent.

The protein localises to the cytoplasm. Its function is as follows. Part of a stress-induced multi-chaperone system, it is involved in the recovery of the cell from heat-induced damage, in cooperation with DnaK, DnaJ and GrpE. Acts before DnaK, in the processing of protein aggregates. Protein binding stimulates the ATPase activity; ATP hydrolysis unfolds the denatured protein aggregates, which probably helps expose new hydrophobic binding sites on the surface of ClpB-bound aggregates, contributing to the solubilization and refolding of denatured protein aggregates by DnaK. The polypeptide is Chaperone protein ClpB 2 (clpB2) (Parasynechococcus marenigrum (strain WH8102)).